The following is a 151-amino-acid chain: Putative pre-16S rRNA nuclease (151 aa).

Belongs to the YqgF nuclease family.

The protein localises to the cytoplasm. Its function is as follows. Could be a nuclease involved in processing of the 5'-end of pre-16S rRNA. The chain is Putative pre-16S rRNA nuclease from Myxococcus xanthus (strain DK1622).